We begin with the raw amino-acid sequence, 119 residues long: Ribonuclease P protein component (119 aa).

The protein belongs to the RnpA family. In terms of assembly, consists of a catalytic RNA component (M1 or rnpB) and a protein subunit.

It carries out the reaction Endonucleolytic cleavage of RNA, removing 5'-extranucleotides from tRNA precursor.. Its function is as follows. RNaseP catalyzes the removal of the 5'-leader sequence from pre-tRNA to produce the mature 5'-terminus. It can also cleave other RNA substrates such as 4.5S RNA. The protein component plays an auxiliary but essential role in vivo by binding to the 5'-leader sequence and broadening the substrate specificity of the ribozyme. The chain is Ribonuclease P protein component from Beutenbergia cavernae (strain ATCC BAA-8 / DSM 12333 / CCUG 43141 / JCM 11478 / NBRC 16432 / NCIMB 13614 / HKI 0122).